Reading from the N-terminus, the 184-residue chain is Deoxyuridine 5'-triphosphate nucleotidohydrolase (184 aa).

The span at 1 to 16 (MPHTQTDAHQNNQENF) shows a compositional bias: polar residues. The disordered stretch occupies residues 1 to 25 (MPHTQTDAHQNNQENFSSSLISSRP). Substrate-binding positions include 96-98 (RSG), Asn-109, 113-115 (TID), and Lys-123. Residues 165–184 (STKNTVGNRGAGGFGSTGHD) form a disordered region. A compositionally biased stretch (gly residues) spans 173–184 (RGAGGFGSTGHD).

The protein belongs to the dUTPase family. The cofactor is Mg(2+).

It carries out the reaction dUTP + H2O = dUMP + diphosphate + H(+). It participates in pyrimidine metabolism; dUMP biosynthesis; dUMP from dCTP (dUTP route): step 2/2. This enzyme is involved in nucleotide metabolism: it produces dUMP, the immediate precursor of thymidine nucleotides and it decreases the intracellular concentration of dUTP so that uracil cannot be incorporated into DNA. The sequence is that of Deoxyuridine 5'-triphosphate nucleotidohydrolase from Bartonella henselae (strain ATCC 49882 / DSM 28221 / CCUG 30454 / Houston 1) (Rochalimaea henselae).